The following is a 403-amino-acid chain: TBC1 domain family member 20 (403 aa).

The disordered stretch occupies residues 1–25; that stretch reads MALRSAQGDGPTSGHWDGGAEKADF. The 187-residue stretch at 60–246 folds into the Rab-GAP TBC domain; sequence LLTDEIRRKV…RLYDFFLACH (187 aa). The next 2 helical transmembrane spans lie at 238–258 and 367–387; these read LYDF…AVIV and FVKL…LAVV.

(Microbial infection) Directly interacts with the N-terminal amphipathic helix of hepatitis C virus (HCV) NS5A.

It localises to the membrane. Its function is as follows. GTPase-activating protein (GAP) specific for Rab1 and Rab2 small GTPase families for which it can accelerate the intrinsic GTP hydrolysis rate by more than five orders of magnitude. Also shows GAP activity for RAB18 GTPase. Promotes RAB18 dissociation from the endoplasmic reticulum (ER) membrane into the cytosol, probably through stimulating RAB18 GTP-hydrolysis. Involved in maintaining endoplasmic reticulum structure. In Homo sapiens (Human), this protein is TBC1 domain family member 20.